We begin with the raw amino-acid sequence, 645 residues long: Chaperone protein DnaK (645 aa).

Residue T201 is modified to Phosphothreonine; by autocatalysis. The segment covering 606–629 has biased composition (low complexity); that stretch reads NTNNATAGDNNTTDTGSSSNSDGS. Residues 606–645 form a disordered region; sequence NTNNATAGDNNTTDTGSSSNSDGSKVVDSDYQEIDKKDGK. Basic and acidic residues predominate over residues 630-645; that stretch reads KVVDSDYQEIDKKDGK.

It belongs to the heat shock protein 70 family.

In terms of biological role, acts as a chaperone. The protein is Chaperone protein DnaK of Ehrlichia ruminantium (strain Welgevonden).